The sequence spans 514 residues: 2-isopropylmalate synthase (514 aa).

A Pyruvate carboxyltransferase domain is found at 8-270 (IRIFDTTLRD…DCGVVTEQLF (263 aa)). Mn(2+)-binding residues include D17, H205, H207, and N241. The interval 394 to 514 (RLVNLSVQCS…KEEEQEKEGI (121 aa)) is regulatory domain.

It belongs to the alpha-IPM synthase/homocitrate synthase family. LeuA type 1 subfamily. Homodimer. Requires Mn(2+) as cofactor.

The protein localises to the cytoplasm. It carries out the reaction 3-methyl-2-oxobutanoate + acetyl-CoA + H2O = (2S)-2-isopropylmalate + CoA + H(+). It participates in amino-acid biosynthesis; L-leucine biosynthesis; L-leucine from 3-methyl-2-oxobutanoate: step 1/4. Its function is as follows. Catalyzes the condensation of the acetyl group of acetyl-CoA with 3-methyl-2-oxobutanoate (2-ketoisovalerate) to form 3-carboxy-3-hydroxy-4-methylpentanoate (2-isopropylmalate). The chain is 2-isopropylmalate synthase from Nitratidesulfovibrio vulgaris (strain DSM 19637 / Miyazaki F) (Desulfovibrio vulgaris).